A 206-amino-acid chain; its full sequence is Large ribosomal subunit protein uL3 (206 aa).

A disordered region spans residues serine 127–alanine 151.

This sequence belongs to the universal ribosomal protein uL3 family. Part of the 50S ribosomal subunit. Forms a cluster with proteins L14 and L19.

Functionally, one of the primary rRNA binding proteins, it binds directly near the 3'-end of the 23S rRNA, where it nucleates assembly of the 50S subunit. The chain is Large ribosomal subunit protein uL3 from Borreliella burgdorferi (strain ATCC 35210 / DSM 4680 / CIP 102532 / B31) (Borrelia burgdorferi).